Here is a 142-residue protein sequence, read N- to C-terminus: COA8 family protein CBG23705, mitochondrial (142 aa).

This sequence belongs to the COA8 family.

It is found in the mitochondrion inner membrane. Functionally, may be required for cytochrome c complex (COX) assembly and function, COX being the terminal component of the mitochondrial respiratory chain. The protein is COA8 family protein CBG23705, mitochondrial of Caenorhabditis briggsae.